A 427-amino-acid polypeptide reads, in one-letter code: Histidine--tRNA ligase (427 aa).

Belongs to the class-II aminoacyl-tRNA synthetase family. In terms of assembly, homodimer.

It localises to the cytoplasm. The enzyme catalyses tRNA(His) + L-histidine + ATP = L-histidyl-tRNA(His) + AMP + diphosphate + H(+). This Proteus mirabilis (strain HI4320) protein is Histidine--tRNA ligase.